The primary structure comprises 677 residues: Zinc finger CCCH domain-containing protein 23 (677 aa).

The segment at 66–117 is disordered; it reads PPQAASSSPTVPAAHSPFLLSRQNSGRCPAPSPSSWAQAQPFSRSNSMGNGG. Low complexity predominate over residues 69–82; sequence AASSSPTVPAAHSP. A compositionally biased stretch (polar residues) spans 98-113; sequence PSSWAQAQPFSRSNSM. The segment at 228–255 adopts a C3H1-type zinc-finger fold; sequence GFGWKPCLYYARGFCKNGSTCRFVHGGL. The 77-residue stretch at 359–435 folds into the RRM domain; it reads RQIYLTFPAD…RVLVKPYKEK (77 aa). Positions 480 to 513 form a coiled coil; the sequence is ANELMLRRKLEEQQQAAELQQAIDLHSRRLIGLQ. The span at 535 to 562 shows a compositional bias: polar residues; that stretch reads TPITNAFTSGQPGATTIVESPPSSTGQL. Residues 535 to 607 form a disordered region; the sequence is TPITNAFTSG…EHNLPDSPFA (73 aa). The segment covering 589–601 has biased composition (basic and acidic residues); the sequence is RNADSDQSGEHNL.

The polypeptide is Zinc finger CCCH domain-containing protein 23 (Oryza sativa subsp. japonica (Rice)).